A 300-amino-acid polypeptide reads, in one-letter code: MKIKAKNIVKIYDQKLPSELKALDKVTTEINQGEFIAIIGQTGSGKTTFIQHMNALLLPDQGEIEYLYFDSKNQEKKLVVQKPRFFRKKLKFINEIRRRVGVVFQFAEYQLFEQTIEKDIIFGAVSMGTPKNEAKKIAAEIIELVGLDQSFLQKSPFELSGGQKRRVAIAGILAMDPDIIFFDEPTAGLDPQGTLKMLEILDTLYKKGKTIILATHDLDSVLEWTKRCIFFKDGRIIYDGDTYSILANNKFLIENKMLPTNLLNFREKLIKIGYPISNVRSVSELISEINMLIQKETNAD.

The ABC transporter domain maps to 3–258 (IKAKNIVKIY…NKFLIENKML (256 aa)). 40 to 47 (GQTGSGKT) contacts ATP.

The protein belongs to the ABC transporter superfamily. Energy-coupling factor EcfA family. As to quaternary structure, forms a stable energy-coupling factor (ECF) transporter complex composed of 2 membrane-embedded substrate-binding proteins (S component), 2 ATP-binding proteins (A component) and 2 transmembrane proteins (T component).

Its subcellular location is the cell membrane. ATP-binding (A) component of a common energy-coupling factor (ECF) ABC-transporter complex. Unlike classic ABC transporters this ECF transporter provides the energy necessary to transport a number of different substrates. The chain is Energy-coupling factor transporter ATP-binding protein EcfA2 from Mesomycoplasma hyopneumoniae (strain 232) (Mycoplasma hyopneumoniae).